The chain runs to 351 residues: Auxin efflux carrier component 5 (351 aa).

A run of 10 helical transmembrane segments spans residues 7–27 (VYKV…GYGS), 39–59 (CDAI…IEFT), 71–91 (FIAA…LWAK), 100–120 (WSIT…GVPL), 132–152 (LVVQ…LFVL), 210–230 (ILGI…PGIL), 234–254 (ILIM…IFMA), 271–291 (MVLK…VLGL), 295–315 (VLRV…FIFA), and 329–349 (VIFG…ALEF).

The protein belongs to the auxin efflux carrier (TC 2.A.69.1) family. As to expression, expressed in elongating parts of hypocotyl, cotyledon vasculature and guard cells. Detected in root pericycle and root tip and at later developmental stages in leaves, stems and flowers. Expressed in veins of mature leaves.

It localises to the endoplasmic reticulum membrane. It is found in the cell membrane. In terms of biological role, auxin transporter regulating intracellular auxin homeostasis and metabolism. Mediates the auxin transport from the cytosol into the lumen of the endoplasmic reticulum. May also act as an auxin efflux carrier when located to the cell membrane. PIN5 and PIN8 may have an antagonistic/compensatory activity. Involved in unfolded protein response (UPR) activation. Involved in the control of vein patterning. Promotes vein formation. PIN5, PIN6, and PIN8 control vein network geometry, but they are expressed in mutually exclusive domains of leaf vascular cells. In Arabidopsis thaliana (Mouse-ear cress), this protein is Auxin efflux carrier component 5.